The chain runs to 144 residues: Putative pre-16S rRNA nuclease (144 aa).

Belongs to the YqgF nuclease family.

The protein localises to the cytoplasm. In terms of biological role, could be a nuclease involved in processing of the 5'-end of pre-16S rRNA. In Blochmanniella pennsylvanica (strain BPEN), this protein is Putative pre-16S rRNA nuclease.